The chain runs to 444 residues: MTILVLGINHKTASVALREKVAFSPEKRDLAFQQIAQSELAQSEVILSTCNRTEIYLHNKHISPEADQENQRWLEQCIQWFADVHQLDVDELRNCLYIKQNQSAVNHLMRVSCGLDSLVLGEPQILGQVKQAYQYSEDYCQAQHMPMSSEFSRLFQKTFSVAKRVRTETNIGNSAVSVAYAACSLARQIFEGLKDLNILLVGAGETIELVARHLLRHGVKKLMISNRTLARAELLVEKLEHNKYIQVLSLQQLQDGLNQADIVISSTGSPIVLITAEMVKQAQQKRRNAPMLIVDIAVPRDVDERVEKLDGVYHYTVDDLHSIIQRNLSEREKASKEAETIIDAEASDFFEWMKVHQFSNLIRTYRESAEQIRQDLLEKAVQAIGQNEDPETVLQELSYKLMNKLIHSPTQAMQAMMKQGSIQGLRSFSSALGIADKKERNPQK.

Residues threonine 49–arginine 52, serine 117, glutamate 122–glutamine 124, and glutamine 128 contribute to the substrate site. The active-site Nucleophile is cysteine 50. Glycine 202–isoleucine 207 contacts NADP(+).

The protein belongs to the glutamyl-tRNA reductase family. As to quaternary structure, homodimer.

The enzyme catalyses (S)-4-amino-5-oxopentanoate + tRNA(Glu) + NADP(+) = L-glutamyl-tRNA(Glu) + NADPH + H(+). The protein operates within porphyrin-containing compound metabolism; protoporphyrin-IX biosynthesis; 5-aminolevulinate from L-glutamyl-tRNA(Glu): step 1/2. Its function is as follows. Catalyzes the NADPH-dependent reduction of glutamyl-tRNA(Glu) to glutamate 1-semialdehyde (GSA). The protein is Glutamyl-tRNA reductase of Mannheimia succiniciproducens (strain KCTC 0769BP / MBEL55E).